The primary structure comprises 515 residues: Maturase K (515 aa).

It belongs to the intron maturase 2 family. MatK subfamily.

It is found in the plastid. The protein resides in the chloroplast. In terms of biological role, usually encoded in the trnK tRNA gene intron. Probably assists in splicing its own and other chloroplast group II introns. This chain is Maturase K, found in Picea mariana (Black spruce).